The sequence spans 390 residues: Protein SOSEKI 4 (390 aa).

Residues 22 to 115 (RMAEVLYVLS…YALKATKRFD (94 aa)) form a DIX-like oligomerization domain region. 2 disordered regions span residues 210-247 (KSNS…NRTG) and 291-321 (RESN…SGGS). Polar residues predominate over residues 304–321 (PSVQAETHVSKLSKSGGS).

It belongs to the SOSEKI family. Homodimer. Forms long polymer filaments with other SOKs proteins polymers crucial for polar localization and biological activity.

The protein resides in the cell membrane. SOSEKI proteins locally interpret global polarity cues and can influence cell division orientation to coordinate cell polarization relative to body axes. This chain is Protein SOSEKI 4, found in Physcomitrium patens (Spreading-leaved earth moss).